Here is a 530-residue protein sequence, read N- to C-terminus: Asc-type amino acid transporter 1 (530 aa).

A disordered region spans residues 1 to 36 (MRRDSDMASHIQQPGGHGNPGPAPSPSPGPGPGPGA). Residues 21–33 (GPAPSPSPGPGPG) show a composition bias toward pro residues. Transmembrane regions (helical) follow at residues 46-66 (IGLV…GIFI), 78-98 (VGLA…GSLC), 119-139 (IFGG…MYPT), 192-212 (IQVI…TVGF), 274-294 (AIFI…VAYF), 316-336 (LLGY…FGGI), 368-388 (CTPI…MLVG), 394-414 (INYV…GLLV), 430-450 (LLVP…SFIS), and 454-474 (VCGV…LGVF). The interval 508–530 (EEENGPMGQPSPLPITDKPLKTQ) is disordered.

Belongs to the amino acid-polyamine-organocation (APC) superfamily. As to quaternary structure, disulfide-linked heterodimer with the amino acid transport protein SLC3A2/4F2hc.

It localises to the cell membrane. The enzyme catalyses L-alanine(in) + glycine(out) = L-alanine(out) + glycine(in). The catalysed reaction is L-serine(out) + L-alanine(in) = L-serine(in) + L-alanine(out). It catalyses the reaction L-threonine(out) + L-alanine(in) = L-threonine(in) + L-alanine(out). It carries out the reaction L-cysteine(out) + L-alanine(in) = L-cysteine(in) + L-alanine(out). The enzyme catalyses 2-aminoisobutanoate(out) + L-alanine(in) = 2-aminoisobutanoate(in) + L-alanine(out). The catalysed reaction is D-serine(out) + L-alanine(in) = D-serine(in) + L-alanine(out). It catalyses the reaction D-alanine(out) + L-alanine(in) = D-alanine(in) + L-alanine(out). It carries out the reaction L-valine(out) + L-alanine(in) = L-valine(in) + L-alanine(out). The enzyme catalyses L-methionine(out) + L-alanine(in) = L-methionine(in) + L-alanine(out). The catalysed reaction is beta-alanine(out) + L-alanine(in) = beta-alanine(in) + L-alanine(out). It catalyses the reaction D-cysteine(out) + L-alanine(in) = D-cysteine(in) + L-alanine(out). It carries out the reaction D-threonine(out) + L-alanine(in) = D-threonine(in) + L-alanine(out). The enzyme catalyses D-isoleucine(out) + D-serine(in) = D-isoleucine(in) + D-serine(out). The catalysed reaction is D-serine(in) = D-serine(out). Associates with SLC3A2/4F2hc to form a functional heterodimeric complex that translocates small neutral L- and D-amino acids across the plasma membrane. Preferentially mediates exchange transport, but can also operate via facilitated diffusion. Acts as a major transporter for glycine, L- and D-serine in the central nervous system. At the spinal cord and brainstem regulates glycine metabolism and glycinergic inhibitory neurotransmission by providing for glycine de novo synthesis from L-serine and glycine recycling from astrocytes to glycinergic motor neurons. At Schaffer collateral-CA1 synapses mediates D-serine and glycine release that modulates post-synaptic activation of NMDA receptors and excitatory glutamatergic transmission. May regulate D-serine release from mesenchymal progenitors located in developing subcutaneous adipose tissue, favoring white adipocyte over thermogenic beige adipocyte lineage commitment. The chain is Asc-type amino acid transporter 1 (Slc7a10) from Rattus norvegicus (Rat).